The primary structure comprises 154 residues: MSLIPGFFGGRRSNVFDPFSLDMWDPFKDFHVPTSSVSAENSAFVSTRVDWKETPEAHVFKADIPGLKKEEVKVQIEDDRVLQISGERNVEKEDKNDTWHRVERSSGKFTRRFRLPENAKVNEVKASMENGVLTVTVPKEEVKKPDVKAIEISG.

In terms of domain architecture, sHSP spans 40–154 (ENSAFVSTRV…PDVKAIEISG (115 aa)).

This sequence belongs to the small heat shock protein (HSP20) family. In terms of assembly, forms oligomeric structures.

Its subcellular location is the cytoplasm. In Glycine max (Soybean), this protein is 17.5 kDa class I heat shock protein (HSP17.5-E).